A 222-amino-acid polypeptide reads, in one-letter code: Leucyl/phenylalanyl-tRNA--protein transferase (222 aa).

The protein belongs to the L/F-transferase family.

It localises to the cytoplasm. It carries out the reaction N-terminal L-lysyl-[protein] + L-leucyl-tRNA(Leu) = N-terminal L-leucyl-L-lysyl-[protein] + tRNA(Leu) + H(+). It catalyses the reaction N-terminal L-arginyl-[protein] + L-leucyl-tRNA(Leu) = N-terminal L-leucyl-L-arginyl-[protein] + tRNA(Leu) + H(+). The enzyme catalyses L-phenylalanyl-tRNA(Phe) + an N-terminal L-alpha-aminoacyl-[protein] = an N-terminal L-phenylalanyl-L-alpha-aminoacyl-[protein] + tRNA(Phe). Its function is as follows. Functions in the N-end rule pathway of protein degradation where it conjugates Leu, Phe and, less efficiently, Met from aminoacyl-tRNAs to the N-termini of proteins containing an N-terminal arginine or lysine. In Legionella pneumophila (strain Paris), this protein is Leucyl/phenylalanyl-tRNA--protein transferase.